Consider the following 836-residue polypeptide: MAKQQDQVDKIRENLDNSTVKSISLANELERSFMEYAMSVIVARALPDARDGLKPVHRRVLYGAYIGGMHHDRPFKKSARIVGDVMSKFHPHGDMAIYDTMSRMAQDFSLRYLLIDGHGNFGSIDGDRPAAQRYTEARLSKLAAELLKDIDKDTVDFIANYDGEEKEPTVLPAAFPNLLANGSSGIAVGMSTSIPSHNLSELIAGLIMLIDNPQCTFQELLTVIKGPDFPTGANIIYTKGIESYFETGKGNVVIRSKVEIEQLQTRSALVVTEIPYMVNKTTLIEKIVELVKAEEISGIADIRDESSREGIRLVIEVKRDTVPEVLLNQLFKSTRLQVRFPVNMLALVKGAPVLLNMKQALEVYLDHQIDVLVRKTKFVLNKQQERYHILSGLLIAALNIDEVVAIIKKSANNQEAINTLNTKFKLDEIQAKAVLDMRLRSLSVLEVNKLQTEQKELKDSIEFCKKVLADQKLQLKIIKEELQKINDQFGDERRSEILYDISEEIDDESLIKVENVVITMSTNGYLKRIGVDAYNLQHRGGVGVKGLTTYVDDSISQLLVCSTHSDLLFFTDKGKVYRIRAHQIPYGFRTNKGIPAVNLIKIEKDERICSLLSVNNYDDGYFFFCTKNGIVKRTSLNEFINILSNGKRAISFDDNDTLYSVIKTHGNDEIFIGSTNGFVVRFHENQLRVLSRTARGVFGISLNKGEFVNGLSTSSNGSLLLSVGQNGIGKLTSIDKYRLTKRNAKGVKTLRVTDRTGPVVTTTTVFGNEDLLMISSAGKIVRTSLQELSEQGKNTSGVKLIRLKDNERLERVTIFKEELEDKEMQLEDVGSKQITQ.

The 465-residue stretch at 46-510 folds into the Topo IIA-type catalytic domain; the sequence is LPDARDGLKP…ISEEIDDESL (465 aa). Residue tyrosine 134 is the O-(5'-phospho-DNA)-tyrosine intermediate of the active site. The short motif at 537–543 is the GyrA-box element; the sequence is QHRGGVG.

It belongs to the type II topoisomerase GyrA/ParC subunit family. Heterotetramer, composed of two GyrA and two GyrB chains. In the heterotetramer, GyrA contains the active site tyrosine that forms a transient covalent intermediate with DNA, while GyrB binds cofactors and catalyzes ATP hydrolysis.

The protein resides in the cytoplasm. It catalyses the reaction ATP-dependent breakage, passage and rejoining of double-stranded DNA.. In terms of biological role, a type II topoisomerase that negatively supercoils closed circular double-stranded (ds) DNA in an ATP-dependent manner to modulate DNA topology and maintain chromosomes in an underwound state. Negative supercoiling favors strand separation, and DNA replication, transcription, recombination and repair, all of which involve strand separation. Also able to catalyze the interconversion of other topological isomers of dsDNA rings, including catenanes and knotted rings. Type II topoisomerases break and join 2 DNA strands simultaneously in an ATP-dependent manner. The protein is DNA gyrase subunit A of Mycoplasma genitalium (strain ATCC 33530 / DSM 19775 / NCTC 10195 / G37) (Mycoplasmoides genitalium).